We begin with the raw amino-acid sequence, 584 residues long: Aspartate--tRNA ligase (584 aa).

Glutamate 169 lines the L-aspartate pocket. Positions 193-196 (QLFK) are aspartate. Arginine 215 provides a ligand contact to L-aspartate. Residues 215–217 (RDE) and glutamine 224 each bind ATP. Histidine 446 is a binding site for L-aspartate. Position 480 (glutamate 480) interacts with ATP. Residue arginine 487 coordinates L-aspartate. An ATP-binding site is contributed by 532-535 (GLDR).

This sequence belongs to the class-II aminoacyl-tRNA synthetase family. Type 1 subfamily. In terms of assembly, homodimer.

It localises to the cytoplasm. It carries out the reaction tRNA(Asp) + L-aspartate + ATP = L-aspartyl-tRNA(Asp) + AMP + diphosphate. Its function is as follows. Catalyzes the attachment of L-aspartate to tRNA(Asp) in a two-step reaction: L-aspartate is first activated by ATP to form Asp-AMP and then transferred to the acceptor end of tRNA(Asp). The polypeptide is Aspartate--tRNA ligase (Buchnera aphidicola subsp. Schizaphis graminum (strain Sg)).